The sequence spans 342 residues: Thymidylate synthase (342 aa).

DUMP-binding positions include Arg-31 and 156–157 (RR). The active-site Nucleophile is Cys-176. Residues 196-199 (RSGD), Asn-207, and 237-239 (HVY) contribute to the dUMP site. Asp-199 provides a ligand contact to (6R)-5,10-methylene-5,6,7,8-tetrahydrofolate. Ala-341 provides a ligand contact to (6R)-5,10-methylene-5,6,7,8-tetrahydrofolate.

Belongs to the thymidylate synthase family. Bacterial-type ThyA subfamily. As to quaternary structure, homodimer.

It is found in the cytoplasm. The catalysed reaction is dUMP + (6R)-5,10-methylene-5,6,7,8-tetrahydrofolate = 7,8-dihydrofolate + dTMP. The protein operates within pyrimidine metabolism; dTTP biosynthesis. Functionally, catalyzes the reductive methylation of 2'-deoxyuridine-5'-monophosphate (dUMP) to 2'-deoxythymidine-5'-monophosphate (dTMP) while utilizing 5,10-methylenetetrahydrofolate (mTHF) as the methyl donor and reductant in the reaction, yielding dihydrofolate (DHF) as a by-product. This enzymatic reaction provides an intracellular de novo source of dTMP, an essential precursor for DNA biosynthesis. This Haloferax volcanii (Halobacterium volcanii) protein is Thymidylate synthase.